The following is a 490-amino-acid chain: Katanin p60 ATPase-containing subunit A-like 1 (490 aa).

N-acetylmethionine is present on Met-1. Positions Asp-95–Ile-178 are disordered. Over residues Pro-116 to Val-127 the composition is skewed to basic and acidic residues. The segment covering Ala-128–Ala-139 has biased composition (low complexity). Residues Ser-143 to Met-169 show a composition bias toward basic and acidic residues. Position 174 is a phosphoserine (Ser-174). Position 248 to 255 (Gly-248 to Thr-255) interacts with ATP.

It belongs to the AAA ATPase family. Katanin p60 subunit A1 subfamily. A-like 1 sub-subfamily. In terms of assembly, interacts with KATNB1 and KATNBL1.

Its subcellular location is the cytoplasm. The protein resides in the cytoskeleton. The protein localises to the spindle pole. It localises to the spindle. The enzyme catalyses n ATP + n H2O + a microtubule = n ADP + n phosphate + (n+1) alpha/beta tubulin heterodimers.. Regulates microtubule dynamics in Sertoli cells, a process that is essential for spermiogenesis and male fertility. Severs microtubules in an ATP-dependent manner, promoting rapid reorganization of cellular microtubule arrays. Has microtubule-severing activity in vitro. This is Katanin p60 ATPase-containing subunit A-like 1 from Sorex araneus (Eurasian common shrew).